A 296-amino-acid polypeptide reads, in one-letter code: Ribosomal RNA small subunit methyltransferase A (296 aa).

S-adenosyl-L-methionine-binding residues include Asn-31, Leu-33, Gly-58, Glu-79, Asp-104, and Asn-129.

This sequence belongs to the class I-like SAM-binding methyltransferase superfamily. rRNA adenine N(6)-methyltransferase family. RsmA subfamily.

The protein resides in the cytoplasm. The catalysed reaction is adenosine(1518)/adenosine(1519) in 16S rRNA + 4 S-adenosyl-L-methionine = N(6)-dimethyladenosine(1518)/N(6)-dimethyladenosine(1519) in 16S rRNA + 4 S-adenosyl-L-homocysteine + 4 H(+). In terms of biological role, specifically dimethylates two adjacent adenosines (A1518 and A1519) in the loop of a conserved hairpin near the 3'-end of 16S rRNA in the 30S particle. May play a critical role in biogenesis of 30S subunits. In Shouchella clausii (strain KSM-K16) (Alkalihalobacillus clausii), this protein is Ribosomal RNA small subunit methyltransferase A.